The chain runs to 469 residues: uncharacterized protein (469 aa).

Disordered stretches follow at residues 248 to 314 (RDDN…EPES) and 327 to 418 (QMDQ…PRPT). Polar residues-rich tracts occupy residues 292-305 (ESSNTRDQQTNAAS) and 350-365 (TARQPQVTPTRVPNTV). The span at 366–377 (TATSASTPASTS) shows a compositional bias: low complexity.

This is an uncharacterized protein from Cryphonectria parasitica (Chestnut blight fungus).